The chain runs to 56 residues: Large ribosomal subunit protein bL32 (56 aa).

Residues 1-36 form a disordered region; it reads MAVQQNKKSRSKRGMRRSHDALSTAQLSVDATSGEV. Residues 7 to 16 show a composition bias toward basic residues; sequence KKSRSKRGMR. The segment covering 21-31 has biased composition (polar residues); that stretch reads ALSTAQLSVDA.

Belongs to the bacterial ribosomal protein bL32 family.

The protein is Large ribosomal subunit protein bL32 of Shewanella oneidensis (strain ATCC 700550 / JCM 31522 / CIP 106686 / LMG 19005 / NCIMB 14063 / MR-1).